Here is a 397-residue protein sequence, read N- to C-terminus: Lysosomal acid lipase/cholesteryl ester hydrolase (397 aa).

The signal sequence occupies residues M1 to S25. A propeptide spans A26–K72 (removed in mature form). N-linked (GlcNAc...) asparagine glycans are attached at residues N34, N99, and N159. One can recognise an AB hydrolase-1 domain in the interval H84–G378. The Charge relay system role is filled by S172. Residues N271 and N319 are each glycosylated (N-linked (GlcNAc...) asparagine). H372 functions as the Charge relay system in the catalytic mechanism.

It belongs to the AB hydrolase superfamily. Lipase family. As to quaternary structure, monomer. Glycosylation is not essential for catalytic activity.

It localises to the lysosome. The catalysed reaction is a sterol ester + H2O = a sterol + a fatty acid + H(+). It catalyses the reaction cholesteryl (9Z-octadecenoate) + H2O = cholesterol + (9Z)-octadecenoate + H(+). The enzyme catalyses a triacylglycerol + H2O = a 1,2-diacylglycerol + a fatty acid + H(+). It carries out the reaction 1,2-di-(9Z-octadecenoyl)-glycerol + (9Z)-octadecenoate + H(+) = 1,2,3-tri-(9Z-octadecenoyl)-glycerol + H2O. The catalysed reaction is a 1,2-diacylglycerol + H2O = a 1-acylglycerol + a fatty acid + H(+). It catalyses the reaction 1,2-di-(9Z-octadecenoyl)-glycerol + H2O = 1-(9Z-octadecenoyl)-glycerol + (9Z)-octadecenoate + H(+). The enzyme catalyses a 1,3-diacylglycerol + H2O = a 1-acylglycerol + a fatty acid + H(+). It carries out the reaction 1,3-di-(9Z-octadecenoyl)-glycerol + H2O = 1-(9Z-octadecenoyl)-glycerol + (9Z)-octadecenoate + H(+). Functionally, catalyzes the deacylation of cholesteryl ester core lipids of endocytosed low density lipoproteins to generate free fatty acids and cholesterol. Hydrolyzes triglycerides (1,2,3-triacylglycerol) and diglycerides (such as 1,2-diacylglycerol and 1,3-diacylglycerol) with preference for the acyl moieties at the sn-1 or sn-3 positions. This Rattus norvegicus (Rat) protein is Lysosomal acid lipase/cholesteryl ester hydrolase (Lipa).